A 185-amino-acid polypeptide reads, in one-letter code: Guanylate kinase (185 aa).

The 178-residue stretch at 4–181 (GALYVVSGPS…ACNDLISIIE (178 aa)) folds into the Guanylate kinase-like domain. An ATP-binding site is contributed by 11-18 (GPSGAGKS).

This sequence belongs to the guanylate kinase family.

The protein resides in the cytoplasm. It catalyses the reaction GMP + ATP = GDP + ADP. Functionally, essential for recycling GMP and indirectly, cGMP. This Fusobacterium nucleatum subsp. nucleatum (strain ATCC 25586 / DSM 15643 / BCRC 10681 / CIP 101130 / JCM 8532 / KCTC 2640 / LMG 13131 / VPI 4355) protein is Guanylate kinase.